A 227-amino-acid polypeptide reads, in one-letter code: MAKKGKKYQDAVKLVDKNKVYEVVEGVELVKKAATAKFDETVEVAFRLGVDPKRADQQIRGAVVLPHGTGKVQRVLVFAKGEKAKDAEAAGADFVGDADMIAKIQGGWFDFDVVVATPDMMGEVGKLGRVLGPKGLMPNPKTGTVTFDVTKAVNEIKAGKIEYRVDKAGNIHAPIGKASFDADKLVENLAALTEALNRAKPAAAKGVYMRNVTLSSTMGPGVRVAVK.

Belongs to the universal ribosomal protein uL1 family. In terms of assembly, part of the 50S ribosomal subunit.

Its function is as follows. Binds directly to 23S rRNA. The L1 stalk is quite mobile in the ribosome, and is involved in E site tRNA release. Protein L1 is also a translational repressor protein, it controls the translation of the L11 operon by binding to its mRNA. The protein is Large ribosomal subunit protein uL1 of Brevibacillus brevis (strain 47 / JCM 6285 / NBRC 100599).